Reading from the N-terminus, the 425-residue chain is Enolase (425 aa).

Gln-163 serves as a coordination point for (2R)-2-phosphoglycerate. The active-site Proton donor is the Glu-205. Mg(2+) is bound by residues Asp-242, Glu-285, and Asp-312. Residues Lys-337, Arg-366, Ser-367, and Lys-388 each contribute to the (2R)-2-phosphoglycerate site. Lys-337 functions as the Proton acceptor in the catalytic mechanism.

The protein belongs to the enolase family. It depends on Mg(2+) as a cofactor.

It localises to the cytoplasm. The protein resides in the secreted. It is found in the cell surface. It catalyses the reaction (2R)-2-phosphoglycerate = phosphoenolpyruvate + H2O. It functions in the pathway carbohydrate degradation; glycolysis; pyruvate from D-glyceraldehyde 3-phosphate: step 4/5. In terms of biological role, catalyzes the reversible conversion of 2-phosphoglycerate (2-PG) into phosphoenolpyruvate (PEP). It is essential for the degradation of carbohydrates via glycolysis. This is Enolase from Acidiphilium cryptum (strain JF-5).